Reading from the N-terminus, the 204-residue chain is dTTP/UTP pyrophosphatase (204 aa).

The Proton acceptor role is filled by D76.

This sequence belongs to the Maf family. YhdE subfamily. A divalent metal cation serves as cofactor.

The protein resides in the cytoplasm. It catalyses the reaction dTTP + H2O = dTMP + diphosphate + H(+). It carries out the reaction UTP + H2O = UMP + diphosphate + H(+). Its function is as follows. Nucleoside triphosphate pyrophosphatase that hydrolyzes dTTP and UTP. May have a dual role in cell division arrest and in preventing the incorporation of modified nucleotides into cellular nucleic acids. In Salinibacter ruber (strain DSM 13855 / M31), this protein is dTTP/UTP pyrophosphatase.